The following is a 266-amino-acid chain: Isopentenyl phosphate kinase (266 aa).

5-9 (KLGGS) lines the ATP pocket. Alanine 47 lines the substrate pocket. Glycine 48 is an ATP binding site. Residues histidine 52 and glycine 157 each contribute to the substrate site. Residues aspartate 178, 183–188 (YTRNPK), glycine 219, and lysine 223 each bind ATP.

This sequence belongs to the isopentenyl phosphate kinase family. Homodimer.

It carries out the reaction isopentenyl phosphate + ATP = isopentenyl diphosphate + ADP. Functionally, catalyzes the formation of isopentenyl diphosphate (IPP), the building block of all isoprenoids. Has lower activity with dimethylallyl phosphate (DMAP) and isopentenyl thiolophosphate (ISP). Has low activity with 1-butyl phosphate (BP) and 3-buten-1-yl phosphate (BEP). Has no significant activity with geranyl phosphate (in vitro). In Methanothermobacter thermautotrophicus (strain ATCC 29096 / DSM 1053 / JCM 10044 / NBRC 100330 / Delta H) (Methanobacterium thermoautotrophicum), this protein is Isopentenyl phosphate kinase.